The sequence spans 355 residues: Peptide chain release factor 1 (355 aa).

Q233 carries the post-translational modification N5-methylglutamine.

The protein belongs to the prokaryotic/mitochondrial release factor family. Methylated by PrmC. Methylation increases the termination efficiency of RF1.

It localises to the cytoplasm. Its function is as follows. Peptide chain release factor 1 directs the termination of translation in response to the peptide chain termination codons UAG and UAA. This is Peptide chain release factor 1 from Bacillus mycoides (strain KBAB4) (Bacillus weihenstephanensis).